Consider the following 148-residue polypeptide: Snaclec B1 (148 aa).

The first 24 residues, 1 to 24 (MGRIIFVSFGLLVVFLSLSGTGAA), serve as a signal peptide directing secretion. Disulfide bonds link Cys27-Cys38, Cys55-Cys144, and Cys121-Cys136. In terms of domain architecture, C-type lectin spans 34–145 (YDQHCYKVFD…CRLLGHFVCK (112 aa)).

This sequence belongs to the snaclec family. As to quaternary structure, heterodimer; disulfide-linked. In terms of tissue distribution, expressed by the venom gland.

It localises to the secreted. In terms of biological role, interferes with one step of hemostasis (modulation of platelet aggregation, or coagulation cascade, for example). The polypeptide is Snaclec B1 (Macrovipera lebetinus (Levantine viper)).